A 156-amino-acid polypeptide reads, in one-letter code: Probable succinate transporter subunit YjjB (156 aa).

4 consecutive transmembrane segments (helical) span residues 7–27, 54–74, 86–106, and 128–148; these read WALL…AMVF, FGMN…IIGI, VFTV…TAMI, and FLKA…PGIW.

It belongs to the ThrE exporter (TC 2.A.79) family. As to quaternary structure, the transporter is composed of YjjB and YjjP.

It localises to the cell inner membrane. Involved in succinate export with YjjP. Both proteins are required for export. This Pectobacterium carotovorum subsp. carotovorum (strain PC1) protein is Probable succinate transporter subunit YjjB.